Here is an 843-residue protein sequence, read N- to C-terminus: Protein kintoun (843 aa).

Disordered regions lie at residues 212-242, 371-417, 545-672, and 761-843; these read PTAEQLEPHPLQNIYPTAPPTSNPEPRVHPM, FSRE…PVHS, YTVK…GASQ, and KKNQ…DDVM. S376 carries the phosphoserine modification. Acidic residues predominate over residues 387-397; sequence PVEEEEADADL. A compositionally biased stretch (basic and acidic residues) spans 564 to 573; sequence VKFDHNKESL. Residues 584–593 show a composition bias toward acidic residues; it reads TEEDEVEEQH. The span at 605 to 619 shows a compositional bias: basic residues; the sequence is QNKKPSKKQRKRNKK. The segment covering 658–671 has biased composition (polar residues); the sequence is YSECNDSSVGSGAS. Positions 761–775 are enriched in basic residues; the sequence is KKNQKRRDLKLRAQQ. S779 bears the Phosphoserine mark.

Belongs to the PIH1 family. Kintoun subfamily. Interacts with Pp1alpha-96A, Pp1-87B, Pp1-13C and flw.

It localises to the cytoplasm. Required for cytoplasmic pre-assembly of axonemal dyneins, thereby playing a central role in motility in cilia and flagella. Involved in pre-assembly of dynein arm complexes in the cytoplasm before intraflagellar transport loads them for the ciliary compartment. This Drosophila ananassae (Fruit fly) protein is Protein kintoun.